We begin with the raw amino-acid sequence, 209 residues long: Pyridoxal 5'-phosphate synthase subunit PdxT (209 aa).

An L-glutamine-binding site is contributed by 58–60 (GES). The active-site Nucleophile is C90. Residues R119 and 148 to 149 (IR) each bind L-glutamine. Catalysis depends on charge relay system residues H185 and E187.

It belongs to the glutaminase PdxT/SNO family. In the presence of PdxS, forms a dodecamer of heterodimers. Only shows activity in the heterodimer.

It catalyses the reaction aldehydo-D-ribose 5-phosphate + D-glyceraldehyde 3-phosphate + L-glutamine = pyridoxal 5'-phosphate + L-glutamate + phosphate + 3 H2O + H(+). It carries out the reaction L-glutamine + H2O = L-glutamate + NH4(+). It functions in the pathway cofactor biosynthesis; pyridoxal 5'-phosphate biosynthesis. Catalyzes the hydrolysis of glutamine to glutamate and ammonia as part of the biosynthesis of pyridoxal 5'-phosphate. The resulting ammonia molecule is channeled to the active site of PdxS. This is Pyridoxal 5'-phosphate synthase subunit PdxT from Clavibacter sepedonicus (Clavibacter michiganensis subsp. sepedonicus).